The sequence spans 890 residues: Alanine--tRNA ligase (890 aa).

4 residues coordinate Zn(2+): H565, H569, C677, and H681.

The protein belongs to the class-II aminoacyl-tRNA synthetase family. It depends on Zn(2+) as a cofactor.

Its subcellular location is the cytoplasm. The catalysed reaction is tRNA(Ala) + L-alanine + ATP = L-alanyl-tRNA(Ala) + AMP + diphosphate. Catalyzes the attachment of alanine to tRNA(Ala) in a two-step reaction: alanine is first activated by ATP to form Ala-AMP and then transferred to the acceptor end of tRNA(Ala). Also edits incorrectly charged Ser-tRNA(Ala) and Gly-tRNA(Ala) via its editing domain. This is Alanine--tRNA ligase from Zymomonas mobilis subsp. mobilis (strain ATCC 31821 / ZM4 / CP4).